Here is a 424-residue protein sequence, read N- to C-terminus: Light-independent protochlorophyllide reductase subunit N (424 aa).

Residues Cys-26, Cys-51, and Cys-112 each coordinate [4Fe-4S] cluster.

It belongs to the BchN/ChlN family. As to quaternary structure, protochlorophyllide reductase is composed of three subunits; BchL, BchN and BchB. Forms a heterotetramer of two BchB and two BchN subunits. The cofactor is [4Fe-4S] cluster.

It catalyses the reaction chlorophyllide a + oxidized 2[4Fe-4S]-[ferredoxin] + 2 ADP + 2 phosphate = protochlorophyllide a + reduced 2[4Fe-4S]-[ferredoxin] + 2 ATP + 2 H2O. Its pathway is porphyrin-containing compound metabolism; bacteriochlorophyll biosynthesis (light-independent). Functionally, component of the dark-operative protochlorophyllide reductase (DPOR) that uses Mg-ATP and reduced ferredoxin to reduce ring D of protochlorophyllide (Pchlide) to form chlorophyllide a (Chlide). This reaction is light-independent. The NB-protein (BchN-BchB) is the catalytic component of the complex. The chain is Light-independent protochlorophyllide reductase subunit N from Rhodobacter capsulatus (strain ATCC BAA-309 / NBRC 16581 / SB1003).